Here is a 280-residue protein sequence, read N- to C-terminus: UDP-3-O-acyl-N-acetylglucosamine deacetylase (280 aa).

Histidine 79, histidine 237, and aspartate 241 together coordinate Zn(2+). Histidine 264 serves as the catalytic Proton donor.

It belongs to the LpxC family. Zn(2+) is required as a cofactor.

It catalyses the reaction a UDP-3-O-[(3R)-3-hydroxyacyl]-N-acetyl-alpha-D-glucosamine + H2O = a UDP-3-O-[(3R)-3-hydroxyacyl]-alpha-D-glucosamine + acetate. The protein operates within glycolipid biosynthesis; lipid IV(A) biosynthesis; lipid IV(A) from (3R)-3-hydroxytetradecanoyl-[acyl-carrier-protein] and UDP-N-acetyl-alpha-D-glucosamine: step 2/6. Functionally, catalyzes the hydrolysis of UDP-3-O-myristoyl-N-acetylglucosamine to form UDP-3-O-myristoylglucosamine and acetate, the committed step in lipid A biosynthesis. This Chlamydia caviae (strain ATCC VR-813 / DSM 19441 / 03DC25 / GPIC) (Chlamydophila caviae) protein is UDP-3-O-acyl-N-acetylglucosamine deacetylase.